A 927-amino-acid polypeptide reads, in one-letter code: GPI inositol-deacylase (927 aa).

Over 1–4 the chain is Cytoplasmic; that stretch reads MNPL. The helical transmembrane segment at 5–25 threads the bilayer; that stretch reads SAVFNSVVLVLLALGVTDVFF. The Lumenal segment spans residues 26–595; that stretch reads SYESSRCSMT…QIVRFHGIYL (570 aa). N75 and N155 each carry an N-linked (GlcNAc...) asparagine glycan. S169 is a catalytic residue. N-linked (GlcNAc...) asparagine glycans are attached at residues N230, N362, N397, N432, N444, and N482. Residues 596-616 traverse the membrane as a helical segment; sequence PVYIVANLLLAYGAQLHSILI. Over 617–672 the chain is Cytoplasmic; the sequence is QGSCMDLDLSFDVAAKPYKVDPVLIICKYLLNYKWFKNYWDGLMLPQLDAVQLHAY. The chain crosses the membrane as a helical span at residues 673-693; the sequence is GFWFPLASLFFFIFGTSIAYW. Topologically, residues 694-733 are lumenal; the sequence is SSIGLQAAVRILSSLWIYLKRPSMFPKESKCITYRVYAET. The helical transmembrane segment at 734–754 threads the bilayer; sequence LFFAFISWRSCGTFSLLLVFL. Residues 755–821 are Cytoplasmic-facing; that stretch reads RYLSKVLILY…KALDDCLKMH (67 aa). The helical transmembrane segment at 822-842 threads the bilayer; the sequence is FTILHLNLWIVLLGLPSFIYW. The Lumenal portion of the chain corresponds to 843–858; it reads LKTLRYTIQLDPDPNR. Residues 859-879 traverse the membrane as a helical segment; sequence VSALVLIFILEILMNSTTSAI. The Cytoplasmic portion of the chain corresponds to 880-887; the sequence is KSSVCLKT. A helical transmembrane segment spans residues 888–908; that stretch reads AAVLQLPLSIIVVAFGTLHLY. The Lumenal segment spans residues 909–927; it reads RISNLIAFSLFLHVVCCFV.

It belongs to the GPI inositol-deacylase family.

It localises to the endoplasmic reticulum membrane. Its function is as follows. GPI inositol-deacylase that catalyzes the remove of the acyl chain linked to the 2-OH position of inositol ring from the GPI-anchored protein (GPI-AP) in the endoplasmic reticulum. Initiates the post-attachment remodeling phase of GPI-AP biogenesis and participates in endoplasmic reticulum (ER)-to-Golgi transport of GPI-anchored protein. The sequence is that of GPI inositol-deacylase from Xenopus laevis (African clawed frog).